We begin with the raw amino-acid sequence, 414 residues long: Succinylornithine transaminase (414 aa).

At K260 the chain carries N6-(pyridoxal phosphate)lysine.

This sequence belongs to the class-III pyridoxal-phosphate-dependent aminotransferase family. AstC subfamily. Requires pyridoxal 5'-phosphate as cofactor.

The enzyme catalyses N(2)-succinyl-L-ornithine + 2-oxoglutarate = N-succinyl-L-glutamate 5-semialdehyde + L-glutamate. It participates in amino-acid degradation; L-arginine degradation via AST pathway; L-glutamate and succinate from L-arginine: step 3/5. Functionally, catalyzes the transamination of N(2)-succinylornithine and alpha-ketoglutarate into N(2)-succinylglutamate semialdehyde and glutamate. Can also act as an acetylornithine aminotransferase. The chain is Succinylornithine transaminase from Yersinia pestis bv. Antiqua (strain Antiqua).